The following is a 147-amino-acid chain: Hemoglobin subunit gamma-1 (147 aa).

A Globin domain is found at 3–147 (NFTAEDKAAI…VASALGSRYH (145 aa)). Phosphothreonine is present on Thr-13. Phosphoserine is present on residues Ser-45, Ser-51, and Ser-53. Lys-60 carries the N6-acetyllysine modification. His-64 contacts heme b. Lys-83 is modified (N6-acetyllysine). Position 93 (His-93) interacts with heme b. Cys-94 carries the S-nitrosocysteine modification. Residue Ser-140 is modified to Phosphoserine.

This sequence belongs to the globin family. In terms of assembly, heterotetramer of two alpha chains and two gamma chains in fetal hemoglobin (Hb F). In terms of tissue distribution, red blood cells.

In terms of biological role, gamma chains make up the fetal hemoglobin F, in combination with alpha chains. The protein is Hemoglobin subunit gamma-1 (HBG1) of Sapajus apella (Brown-capped capuchin).